The chain runs to 515 residues: MTKRALISVSDKSGIVDFAKELKNLGWDIISTGGTKVALDNAGVETIAIDDVTGFPEMMDGRVKTLHPNIHGGLLARRDADSHLQAAKDNNIELIDLVVVNLYPFKETILRPDITYDLAVENIDIGGPSMLRSAAKNHASVTVVVDPADYATVLGELADAGQTTFETRQRLAAKVFRHTAAYDALIAEYFTTQVGEAKPEKLTITYDLKQAMRYGENPQQDADFYQKALPIDYSIASAKQLNGKELSFNNIRDADAAIRIIRDFKDRPTVVVLKHMNPCGIGQADDIETAWDYAYEADPVSIFGGIVVLNREVDAATAKKMHPIFLEIIIAPSYSEEALAILTNKKKNLRILELPFDAQAASEVEAEYTGVVGGLLVQNQDVVAENPSDWQVVTDRQPTEQEATALEFAWKAIKYVKSNGIIITNDHMTLGLGAGQTNRVGSVKIAIEQAKDHLDGAVLASDAFFPFADNIEEIAAAGIKAIIQPGGSVRDQDSIDAANKHGLTMIFTGVRHFRH.

Positions 1 to 145 constitute an MGS-like domain; sequence MTKRALISVS…KNHASVTVVV (145 aa).

Belongs to the PurH family.

The catalysed reaction is (6R)-10-formyltetrahydrofolate + 5-amino-1-(5-phospho-beta-D-ribosyl)imidazole-4-carboxamide = 5-formamido-1-(5-phospho-D-ribosyl)imidazole-4-carboxamide + (6S)-5,6,7,8-tetrahydrofolate. It catalyses the reaction IMP + H2O = 5-formamido-1-(5-phospho-D-ribosyl)imidazole-4-carboxamide. The protein operates within purine metabolism; IMP biosynthesis via de novo pathway; 5-formamido-1-(5-phospho-D-ribosyl)imidazole-4-carboxamide from 5-amino-1-(5-phospho-D-ribosyl)imidazole-4-carboxamide (10-formyl THF route): step 1/1. Its pathway is purine metabolism; IMP biosynthesis via de novo pathway; IMP from 5-formamido-1-(5-phospho-D-ribosyl)imidazole-4-carboxamide: step 1/1. The polypeptide is Bifunctional purine biosynthesis protein PurH (Streptococcus pyogenes serotype M3 (strain ATCC BAA-595 / MGAS315)).